Consider the following 414-residue polypeptide: Na(+)-translocating NADH-quinone reductase subunit B (414 aa).

The next 4 helical transmembrane spans lie at 23 to 40, 56 to 76, 129 to 149, and 164 to 184; these read WFALYEAAATLFYTPGLV, IMIMVWFAVFPAMFWGMYNAG, FLPIYATVFLVGGFWEVLFCM, and ILFALIVPPTLPLWQAALGIT. Threonine 236 carries the post-translational modification FMN phosphoryl threonine. 5 consecutive transmembrane segments (helical) span residues 268–288, 297–317, 322–342, 358–378, and 381–401; these read IPGSIGEVSTLALLIGAAMIV, IIAGVMIGMIVVSTLFNVIGS, MFSMPWHWHLVLGGFAFGMFF, WWYGILIGAMCVMIRVVNPAY, and GMMLAILFANLFAPLFDHLVV.

Belongs to the NqrB/RnfD family. Composed of six subunits; NqrA, NqrB, NqrC, NqrD, NqrE and NqrF. FMN serves as cofactor.

It localises to the cell inner membrane. The enzyme catalyses a ubiquinone + n Na(+)(in) + NADH + H(+) = a ubiquinol + n Na(+)(out) + NAD(+). Its function is as follows. NQR complex catalyzes the reduction of ubiquinone-1 to ubiquinol by two successive reactions, coupled with the transport of Na(+) ions from the cytoplasm to the periplasm. NqrA to NqrE are probably involved in the second step, the conversion of ubisemiquinone to ubiquinol. The protein is Na(+)-translocating NADH-quinone reductase subunit B of Vibrio vulnificus (strain CMCP6).